The chain runs to 412 residues: Serine hydroxymethyltransferase (412 aa).

(6S)-5,6,7,8-tetrahydrofolate-binding positions include Leu-117 and 121–123 (GHL). Lys-226 is subject to N6-(pyridoxal phosphate)lysine. 349–351 (SPF) lines the (6S)-5,6,7,8-tetrahydrofolate pocket.

Belongs to the SHMT family. As to quaternary structure, homodimer. Pyridoxal 5'-phosphate is required as a cofactor.

The protein resides in the cytoplasm. The enzyme catalyses (6R)-5,10-methylene-5,6,7,8-tetrahydrofolate + glycine + H2O = (6S)-5,6,7,8-tetrahydrofolate + L-serine. Its pathway is one-carbon metabolism; tetrahydrofolate interconversion. It functions in the pathway amino-acid biosynthesis; glycine biosynthesis; glycine from L-serine: step 1/1. Catalyzes the reversible interconversion of serine and glycine with tetrahydrofolate (THF) serving as the one-carbon carrier. This reaction serves as the major source of one-carbon groups required for the biosynthesis of purines, thymidylate, methionine, and other important biomolecules. Also exhibits THF-independent aldolase activity toward beta-hydroxyamino acids, producing glycine and aldehydes, via a retro-aldol mechanism. The chain is Serine hydroxymethyltransferase from Oleidesulfovibrio alaskensis (strain ATCC BAA-1058 / DSM 17464 / G20) (Desulfovibrio alaskensis).